The following is a 754-amino-acid chain: Catalase-peroxidase (754 aa).

The segment at 1–29 (MGTQPARKLRNRVFPHPHNHRKEKPMAND) is disordered. Residues 7-23 (RKLRNRVFPHPHNHRKE) are compositionally biased toward basic residues. The active-site Tryptophan radical intermediate is tryptophan 106. Residues 122–249 (WHAAGTYRIA…LAAVQMGLIY (128 aa)) constitute a cross-link (tryptophyl-tyrosyl-methioninium (Trp-Tyr) (with M-275)). Histidine 123 serves as the catalytic Proton acceptor. Positions 249 to 275 (YVNPEGVDGHPDPLCTAQDVRTTFARM) form a cross-link, tryptophyl-tyrosyl-methioninium (Tyr-Met) (with W-122). Histidine 290 contributes to the heme b binding site.

Belongs to the peroxidase family. Peroxidase/catalase subfamily. In terms of assembly, homodimer. The cofactor is heme b. Formation of the three residue Trp-Tyr-Met cross-link is important for the catalase, but not the peroxidase activity of the enzyme.

It catalyses the reaction H2O2 + AH2 = A + 2 H2O. The enzyme catalyses 2 H2O2 = O2 + 2 H2O. Functionally, bifunctional enzyme with both catalase and broad-spectrum peroxidase activity. Also displays NADH oxidase, isoniazid hydrazine lyase and isonicotinoyl-NAD synthase activities. This Synechocystis sp. (strain ATCC 27184 / PCC 6803 / Kazusa) protein is Catalase-peroxidase.